The sequence spans 313 residues: Small ribosomal subunit biogenesis GTPase RsgA (313 aa).

Residues 80–237 (KVALRQVIVS…LIDTPGIKEF (158 aa)) form the CP-type G domain. GTP contacts are provided by residues 129–132 (NKVD) and 180–188 (GQSGVGKSS). Residues Cys261, Cys266, His268, and Cys274 each coordinate Zn(2+).

It belongs to the TRAFAC class YlqF/YawG GTPase family. RsgA subfamily. As to quaternary structure, monomer. Associates with 30S ribosomal subunit, binds 16S rRNA. Zn(2+) is required as a cofactor.

It is found in the cytoplasm. Its function is as follows. One of several proteins that assist in the late maturation steps of the functional core of the 30S ribosomal subunit. Helps release RbfA from mature subunits. May play a role in the assembly of ribosomal proteins into the subunit. Circularly permuted GTPase that catalyzes slow GTP hydrolysis, GTPase activity is stimulated by the 30S ribosomal subunit. The chain is Small ribosomal subunit biogenesis GTPase RsgA from Borrelia recurrentis (strain A1).